Reading from the N-terminus, the 1046-residue chain is UDP-N-acetylglucosamine--peptide N-acetylglucosaminyltransferase 110 kDa subunit (1046 aa).

Alanine 2 carries the N-acetylalanine modification. Serine 3 and serine 4 each carry phosphoserine; by GSK3-beta; alternate. 2 O-linked (GlcNAc) serine; alternate glycosylation sites follow: serine 3 and serine 4. The residue at position 20 (serine 20) is a Phosphoserine. TPR repeat units follow at residues 21–54 (FQGLAELAHREYQAGDFEAAERHCMQLWRQEPDN), 89–122 (AEAYSNLGNVYKERGQLQEAIEHYRHALRLKPDF), 123–156 (IDGYINLAAALVAAGDMEGAVQAYVSALQYNPDL), 157–190 (YCVRSDLGNLLKALGRLEEAKACYLKAIETQPNF), 191–224 (AVAWSNLGCVFNAQGEIWLAIHHFEKAVTLDPNF), 225–258 (LDAYINLGNVLKEARIFDRAVAAYLRALSLSPNH), 259–292 (AVVHGNLACVYYEQGLIDLAIDTYRRAIELQPHF), 293–326 (PDAYCNLANALKEKGSVAEAEDCYNTALRLCPTH), 327–360 (ADSLNNLANIKREQGNIEEAVRLYRKALEVFPEF), 361–394 (AAAHSNLASVLQQQGKLQEALMHYKEAIRISPTF), 395–428 (ADAYSNMGNTLKEMQDVQGALQCYTRAIQINPAF), and 429–462 (ADAHSNLASIHKDSGNIPEAIASYRTALKLKPDF). Serine 399 carries O-linked (GlcNAc) serine; by autocatalysis glycosylation. Phosphothreonine is present on threonine 454. A TPR 13; truncated repeat occupies 463 to 473 (PDAYCNLAHCL). The DFP motif motif lies at 464 to 466 (DAY). Residues 487-503 (KKLVSIVADQLEKNRLP) carry the Nuclear localization signal motif. Histidine 508 (proton acceptor) is an active-site residue. Residues glutamine 849, lysine 852, 906–908 (APK), 911–914 (HVRR), 930–932 (HTT), and aspartate 935 contribute to the UDP site. Phosphotyrosine is present on tyrosine 989. A required for phosphatidylinositol 3,4,5-triphosphate binding region spans residues 991 to 1010 (KKIRGKVWKQRISSPLFNTK).

It belongs to the glycosyltransferase 41 family. O-GlcNAc transferase subfamily. Monomer; may exist in different oligomerization states in cells. Homotrimer, oligomerizes via TPR repeats 6 and 7. Trimerization is not necessary for activity in vitro, however it increases affinity for UDP-GlcNAc. Component of a THAP1/THAP3-HCFC1-OGT complex. Component of the NSL complex at least composed of MOF/KAT8, KANSL1, KANSL2, KANSL3, MCRS1, PHF20, OGT1/OGT, WDR5 and HCFC1. Found in a complex with KIF5B, RHOT1, RHOT2 and TRAK1. Found in a complex composed of at least SINHCAF, SIN3A, HDAC1, SAP30, RBBP4, OGT and TET1. Component of a complex composed of KMT2E/MLL5, OGT and USP7; the complex stabilizes KMT2E/MLL5, preventing KMT2E/MLL5 ubiquitination and proteasomal-mediated degradation. Interacts (via TPRs 1-6) with SIN3A; the interaction mediates transcriptional repression in parallel with histone deacetylase. Interacts (via TPR 5-6) with TET1, TET2 and TET3. Interacts (via TPR repeats 6 and 7) with ATXN10. Interacts with NSD2. Interacts with PROSER1; this interaction mediates TET2 O-GlcNAcylation and stability by promoting the interaction between OGT and TET2. In terms of processing, ubiquitinated by the SCF(FBXO31) complex, leading to its proteasomal degradation. Post-translationally, phosphorylation on Ser-3 or Ser-4 by GSK3-beta positively regulates its activity. Phosphorylation at Thr-454 by AMPK promotes nuclear localization. Glycosylated via autocatalysis; O-GlcNAcylation at Ser-399 promotes nuclear localization.

The protein resides in the nucleus. Its subcellular location is the cytoplasm. The enzyme catalyses L-seryl-[protein] + UDP-N-acetyl-alpha-D-glucosamine = 3-O-(N-acetyl-beta-D-glucosaminyl)-L-seryl-[protein] + UDP + H(+). The catalysed reaction is L-threonyl-[protein] + UDP-N-acetyl-alpha-D-glucosamine = 3-O-(N-acetyl-beta-D-glucosaminyl)-L-threonyl-[protein] + UDP + H(+). It participates in protein modification; protein glycosylation. With respect to regulation, subject to product inhibition by UDP. Catalyzes the transfer of a single N-acetylglucosamine from UDP-GlcNAc to a serine or threonine residue in cytoplasmic and nuclear proteins resulting in their modification with a beta-linked N-acetylglucosamine (O-GlcNAc). Glycosylates a large and diverse number of proteins including histone H2B, AKT1, AMPK, ATG4B, CAPRIN1, EZH2, FNIP1, GSDMD, KRT7, LMNA, LMNB1, LMNB2, RPTOR, HOXA1, PFKL, KMT2E/MLL5, MAPT/TAU, TET2, RBL2, RET, NOD2 and HCFC1. Can regulate their cellular processes via cross-talk between glycosylation and phosphorylation or by affecting proteolytic processing. Involved in insulin resistance in muscle and adipocyte cells via glycosylating insulin signaling components and inhibiting the 'Thr-308' phosphorylation of AKT1, enhancing IRS1 phosphorylation and attenuating insulin signaling. Involved in glycolysis regulation by mediating glycosylation of 6-phosphofructokinase PFKL, inhibiting its activity. Plays a key role in chromatin structure by mediating O-GlcNAcylation of 'Ser-112' of histone H2B: recruited to CpG-rich transcription start sites of active genes via its interaction with TET proteins (TET1, TET2 or TET3). As part of the NSL complex indirectly involved in acetylation of nucleosomal histone H4 on several lysine residues. O-GlcNAcylation of 'Ser-75' of EZH2 increases its stability, and facilitating the formation of H3K27me3 by the PRC2/EED-EZH2 complex. Stabilizes KMT2E/MLL5 by mediating its glycosylation, thereby preventing KMT2E/MLL5 ubiquitination. Regulates circadian oscillation of the clock genes and glucose homeostasis in the liver. Stabilizes clock proteins BMAL1 and CLOCK through O-glycosylation, which prevents their ubiquitination and subsequent degradation. Promotes the CLOCK-BMAL1-mediated transcription of genes in the negative loop of the circadian clock such as PER1/2 and CRY1/2. O-glycosylates HCFC1 and regulates its proteolytic processing and transcriptional activity. Component of a THAP1/THAP3-HCFC1-OGT complex that is required for the regulation of the transcriptional activity of RRM1. Regulates mitochondrial motility in neurons by mediating glycosylation of TRAK1. Promotes autophagy by mediating O-glycosylation of ATG4B. Acts as a regulator of mTORC1 signaling by mediating O-glycosylation of RPTOR and FNIP1: O-GlcNAcylation of RPTOR in response to glucose sufficiency promotes activation of the mTORC1 complex. This chain is UDP-N-acetylglucosamine--peptide N-acetylglucosaminyltransferase 110 kDa subunit (OGT), found in Sus scrofa (Pig).